Reading from the N-terminus, the 246-residue chain is MKIDVLSLFPDMVQNGLSQSIIGKAIDRDLIDLEVTDFRDFSVNKHNSVDDAPYGGGAGMLLRPQPIFEAMDQVNAKNPGHKRVILLDPAGVTFNQKVAEEFAQEDHLVFICGHYEGYDERIRTLVTDEVSLGDFVVTGGELGAMVMIDAISRLVPGVLGNEQSAVTDSFSTGLLEHPQYTRPPEYRGLKVPEVLMNGNHKLINEWRDKMSLKRTYERRPDLLENFDLTADQQKWLREIKQETAEK.

S-adenosyl-L-methionine is bound by residues G113 and 132–137 (LGDFVV).

Belongs to the RNA methyltransferase TrmD family. As to quaternary structure, homodimer.

Its subcellular location is the cytoplasm. It catalyses the reaction guanosine(37) in tRNA + S-adenosyl-L-methionine = N(1)-methylguanosine(37) in tRNA + S-adenosyl-L-homocysteine + H(+). Functionally, specifically methylates guanosine-37 in various tRNAs. The sequence is that of tRNA (guanine-N(1)-)-methyltransferase from Latilactobacillus sakei subsp. sakei (strain 23K) (Lactobacillus sakei subsp. sakei).